The following is a 304-amino-acid chain: GMP synthase [glutamine-hydrolyzing] subunit B (304 aa).

The region spanning 2–183 (VKVEKFIPNA…LDLPEEICER (182 aa)) is the GMPS ATP-PPase domain. 28–34 (SGGVDSS) provides a ligand contact to ATP.

In terms of assembly, heterodimer composed of a glutamine amidotransferase subunit (A) and a GMP-binding subunit (B).

The enzyme catalyses XMP + L-glutamine + ATP + H2O = GMP + L-glutamate + AMP + diphosphate + 2 H(+). It participates in purine metabolism; GMP biosynthesis; GMP from XMP (L-Gln route): step 1/1. Its function is as follows. Catalyzes the synthesis of GMP from XMP. The polypeptide is GMP synthase [glutamine-hydrolyzing] subunit B (Methanococcoides burtonii (strain DSM 6242 / NBRC 107633 / OCM 468 / ACE-M)).